The sequence spans 452 residues: Probable mannose-6-phosphate isomerase (452 aa).

Glutamine 141, histidine 143, glutamate 168, and histidine 295 together coordinate Zn(2+). The active site involves arginine 314.

The protein belongs to the mannose-6-phosphate isomerase type 1 family. Requires Zn(2+) as cofactor.

Its subcellular location is the cytoplasm. It catalyses the reaction D-mannose 6-phosphate = D-fructose 6-phosphate. It participates in nucleotide-sugar biosynthesis; GDP-alpha-D-mannose biosynthesis; alpha-D-mannose 1-phosphate from D-fructose 6-phosphate: step 1/2. Functionally, involved in the synthesis of the GDP-mannose and dolichol-phosphate-mannose required for a number of critical mannosyl transfer reactions. The protein is Probable mannose-6-phosphate isomerase (mpi) of Dictyostelium discoideum (Social amoeba).